Here is a 120-residue protein sequence, read N- to C-terminus: Alpha-amylase inhibitor Haim-2 (120 aa).

A signal peptide spans 1 to 32 (MKRYVCSTFVACVMVLCVIPASGAAAHEAVAE). 2 cysteine pairs are disulfide-bonded: Cys43–Cys59 and Cys77–Cys104.

In terms of biological role, inhibits mammalian alpha-amylases specifically but has no action on plant and microbial alpha-amylases. This Streptomyces griseosporeus protein is Alpha-amylase inhibitor Haim-2.